We begin with the raw amino-acid sequence, 178 residues long: MSEPSSCFVLPDPEWIYRVGIGQDSHRFLPSDNPKPCVLGGIIFENTPGFEANSDGDVVFHAICNAFSSVTHQVILGALADELLKAKGISDSAVYLKEAVASLKPTQKISHLAITIEGQRPKLLPKISAMREKIAEILRISLDSVNITATSGEGLTSMGQGHGVQCFCVLTVMEFCPR.

D24, H26, and H61 together coordinate a divalent metal cation. 4-CDP-2-C-methyl-D-erythritol 2-phosphate is bound at residue 24 to 26 (DSH). Residue 150–153 (TSGE) participates in 4-CDP-2-C-methyl-D-erythritol 2-phosphate binding.

The protein belongs to the IspF family. In terms of assembly, homotrimer. A divalent metal cation is required as a cofactor.

It carries out the reaction 4-CDP-2-C-methyl-D-erythritol 2-phosphate = 2-C-methyl-D-erythritol 2,4-cyclic diphosphate + CMP. The protein operates within isoprenoid biosynthesis; isopentenyl diphosphate biosynthesis via DXP pathway; isopentenyl diphosphate from 1-deoxy-D-xylulose 5-phosphate: step 4/6. Involved in the biosynthesis of isopentenyl diphosphate (IPP) and dimethylallyl diphosphate (DMAPP), two major building blocks of isoprenoid compounds. Catalyzes the conversion of 4-diphosphocytidyl-2-C-methyl-D-erythritol 2-phosphate (CDP-ME2P) to 2-C-methyl-D-erythritol 2,4-cyclodiphosphate (ME-CPP) with a corresponding release of cytidine 5-monophosphate (CMP). The protein is 2-C-methyl-D-erythritol 2,4-cyclodiphosphate synthase of Chlamydia muridarum (strain MoPn / Nigg).